Consider the following 237-residue polypeptide: Uridylate kinase (237 aa).

Position 9-12 (9-12 (KLSG)) interacts with ATP. An involved in allosteric activation by GTP region spans residues 17–22 (GSQGYG). Glycine 51 lines the UMP pocket. ATP is bound by residues glycine 52 and arginine 56. UMP contacts are provided by residues aspartate 71 and 132 to 139 (CGNPFFTT). 3 residues coordinate ATP: threonine 159, tyrosine 165, and aspartate 168.

Belongs to the UMP kinase family. As to quaternary structure, homohexamer.

The protein resides in the cytoplasm. It catalyses the reaction UMP + ATP = UDP + ADP. The protein operates within pyrimidine metabolism; CTP biosynthesis via de novo pathway; UDP from UMP (UMPK route): step 1/1. Allosterically activated by GTP. Inhibited by UTP. In terms of biological role, catalyzes the reversible phosphorylation of UMP to UDP. This chain is Uridylate kinase, found in Synechococcus sp. (strain CC9902).